The chain runs to 81 residues: Three-finger toxin MALT0057C (81 aa).

The first 21 residues, 1-21 (MKTLLLTLVVVTIVCLDFGHT), serve as a signal peptide directing secretion. 4 disulfide bridges follow: C24/C43, C38/C60, C62/C73, and C74/C79.

It belongs to the three-finger toxin family. Short-chain subfamily. Type I alpha-neurotoxin sub-subfamily. As to expression, expressed by the venom gland.

It is found in the secreted. Binds to muscle nicotinic acetylcholine receptor (nAChR) and inhibit acetylcholine from binding to the receptor, thereby impairing neuromuscular transmission. In Micrurus altirostris (Uruguayan coral snake), this protein is Three-finger toxin MALT0057C.